We begin with the raw amino-acid sequence, 82 residues long: Small ribosomal subunit protein bS16 (82 aa).

This sequence belongs to the bacterial ribosomal protein bS16 family.

The protein is Small ribosomal subunit protein bS16 of Crocosphaera subtropica (strain ATCC 51142 / BH68) (Cyanothece sp. (strain ATCC 51142)).